Reading from the N-terminus, the 317-residue chain is MQPRLGGPALLLLPPLLLLLLLGAGGGDCGARAEVLFRCPPCTPESLAACKPPPGAAAGPAGDARVPCELVREPGCGCCSVCARLEGERCGVYTPRCGQGLRCYPNPGSELPLRALVHGEGTCEKHGDAEYSASPEQVADNGEEHSEGGLVENHVDGNVNLMGGGGGAGRKPLKSGMKELAVFREKVTEQHRQMGKGGKHHLGLEEPKKLRPPPARTPCQQELDQVLERISTMRLPDERGPLEHLYSLHIPNCDKHGLYNLKQCKMSLNGQRGECWCVNPNTGKLIQGAPTIRGDPECHLFYNEQQGARGVHTQRMQ.

Residues 1 to 33 (MQPRLGGPALLLLPPLLLLLLLGAGGGDCGARA) form the signal peptide. Residues 35–126 (VLFRCPPCTP…VHGEGTCEKH (92 aa)) form the IGFBP N-terminal domain. 6 disulfides stabilise this stretch: Cys39/Cys76, Cys42/Cys78, Cys50/Cys79, Cys68/Cys82, Cys90/Cys103, and Cys97/Cys123. 2 disordered regions span residues 126–146 (HGDA…EEHS) and 190–218 (QHRQ…ARTP). Positions 216-298 (RTPCQQELDQ…APTIRGDPEC (83 aa)) constitute a Thyroglobulin type-1 domain. Cystine bridges form between Cys219–Cys253, Cys264–Cys275, and Cys277–Cys298. Positions 293–295 (RGD) match the Cell attachment site motif.

In terms of assembly, interacts with IGF1. Interacts with IGF2. Interacts (via RGD motif) with integrin alpha5/ITGA5; this interaction induces cell migration, adhesion or apoptosis according to the context. Interacts with PTPRB; this interaction leads to PTPRB dimerization and inactivation. In terms of processing, cleaved by MMP9 leading to release of free IGF2 from IGFBP2-IGF2 complex, which contributes to enhance the motility and the growth of astrocytes. O-glycosylated.

Its subcellular location is the secreted. Functionally, multifunctional protein that plays a critical role in regulating the availability of IGFs such as IGF1 and IGF2 to their receptors and thereby regulates IGF-mediated cellular processes including proliferation, differentiation, and apoptosis in a cell-type specific manner. Functions coordinately with receptor protein tyrosine phosphatase beta/PTPRB and the IGF1 receptor to regulate IGF1-mediated signaling by stimulating the phosphorylation of PTEN leading to its inactivation and AKT1 activation. Plays a positive role in cell migration via interaction with integrin alpha5/ITGA5 through an RGD motif. Additionally, interaction with ITGA5/ITGB1 enhances the adhesion of endothelial progenitor cells to endothelial cells. Upon mitochondrial damage, facilitates apoptosis with ITGA5 of podocytes, and then activates the phosphorylation of focal adhesion kinase (FAK)-mediated mitochondrial injury. This is Insulin-like growth factor-binding protein 2 (IGFBP2) from Bos taurus (Bovine).